Reading from the N-terminus, the 274-residue chain is NADH-ubiquinone oxidoreductase chain 2 (274 aa).

Helical transmembrane passes span M28–P48, L54–I74, I79–L99, L107–E127, S128–F148, F171–P191, F206–C226, and L254–F274.

The protein belongs to the complex I subunit 2 family.

The protein resides in the mitochondrion inner membrane. It carries out the reaction a ubiquinone + NADH + 5 H(+)(in) = a ubiquinol + NAD(+) + 4 H(+)(out). Core subunit of the mitochondrial membrane respiratory chain NADH dehydrogenase (Complex I) that is believed to belong to the minimal assembly required for catalysis. Complex I functions in the transfer of electrons from NADH to the respiratory chain. The immediate electron acceptor for the enzyme is believed to be ubiquinone. The sequence is that of NADH-ubiquinone oxidoreductase chain 2 (mt:ND2) from Drosophila mauritiana (Fruit fly).